The chain runs to 926 residues: Ubiquitin carboxyl-terminal hydrolase 4 (926 aa).

Residues 205–328 (SQMEILLIDI…WLKSNYGSQV (124 aa)) enclose the Rhodanese domain. Ser443 carries the post-translational modification Phosphoserine. The 362-residue stretch at 562–923 (VGLENLGNSC…NAYVLFYHRV (362 aa)) folds into the USP domain. Cys571 acts as the Nucleophile in catalysis. His880 functions as the Proton acceptor in the catalytic mechanism.

The protein belongs to the peptidase C19 family. As to quaternary structure, interacts with BRO1, RFU1 and VPS32. Associates with the 26S proteasome.

The protein localises to the cytoplasm. It is found in the late endosome membrane. It catalyses the reaction Thiol-dependent hydrolysis of ester, thioester, amide, peptide and isopeptide bonds formed by the C-terminal Gly of ubiquitin (a 76-residue protein attached to proteins as an intracellular targeting signal).. Its activity is regulated as follows. RFU1 is an inhibitor of deubiquitination activity. Functionally, ubiquitin thioesterase that acts at the late endosome/prevacuolar compartment to recover ubiquitin from ubiquitinated membrane proteins en route to the vacuole. Also removes ubiquitin from soluble proteins targeted to proteasomes. Is essential to maintain a normal level of free ubiquitin. Involved in the ammonium-induced down-regulation of the GAP1 permease and the UME3 destruction in response to oxidative stress. Has a role in the RAD9 checkpoint response to TOP1 poisons. Required for promoting coordination of DNA replication and avoids DNA overreplication. The polypeptide is Ubiquitin carboxyl-terminal hydrolase 4 (DOA4) (Saccharomyces cerevisiae (strain YJM789) (Baker's yeast)).